A 291-amino-acid polypeptide reads, in one-letter code: Pca regulon regulatory protein (291 aa).

The interval 1–22 is disordered; the sequence is MSDETLVNDPVNPEPARPASAA. The region spanning 45–105 is the HTH iclR-type domain; sequence MTSLARGLAV…SDGRTYSLLP (61 aa). The segment at residues 67 to 86 is a DNA-binding region (H-T-H motif); sequence IAQISHRTEIPRAAVRRCLH. The IclR-ED domain occupies 120–291; the sequence is LAISAQPYLD…SRDLCHQLFG (172 aa).

Positive regulator of all genes within the pca regulon, pcaBDC, pcaIJ and pcaF. Also required for the chemotactic response to aromatic compounds. The polypeptide is Pca regulon regulatory protein (pcaR) (Pseudomonas putida (Arthrobacter siderocapsulatus)).